The sequence spans 541 residues: Cytochrome bc1 complex cytochrome b subunit (541 aa).

Residues 36-56 (FLLGEIALYSFIILILTGVYL) traverse the membrane as a helical segment. 2 residues coordinate heme: His-105 and His-119. The next 3 membrane-spanning stretches (helical) occupy residues 109–129 (ALMF…TGAF), 137–157 (WVIG…GYSL), and 169–189 (IMSA…WMIF). His-206 and His-221 together coordinate heme. A run of 5 helical transmembrane segments spans residues 207-227 (VLII…LVWY), 256-276 (SVAF…VTTI), 325-345 (VFWV…YPWI), 371-391 (LGVM…NDIW), and 408-428 (IGLI…CIGL).

This sequence belongs to the cytochrome b family. The cytochrome bc1 complex is composed of a cytochrome b (QcrB), the Rieske protein iron-sulfur (QcrA) and a diheme cytochrome c (QcrC) subunit. The cofactor is heme.

Its subcellular location is the cell membrane. It carries out the reaction a quinol + 2 Fe(III)-[cytochrome c](out) = a quinone + 2 Fe(II)-[cytochrome c](out) + 2 H(+)(out). Cytochrome b subunit of the cytochrome bc1 complex, an essential component of the respiratory electron transport chain required for ATP synthesis. The bc1 complex catalyzes the oxidation of menaquinol and the reduction of cytochrome c in the respiratory chain. The bc1 complex operates through a Q-cycle mechanism that couples electron transfer to generation of the proton gradient that drives ATP synthesis. The sequence is that of Cytochrome bc1 complex cytochrome b subunit (qcrB) from Corynebacterium efficiens (strain DSM 44549 / YS-314 / AJ 12310 / JCM 11189 / NBRC 100395).